The following is a 546-amino-acid chain: MKNINPMKTHAWKKLQNHFFDVKNIYIKDFFCLDKNRFANFSVFFKDFMLIDFSKNRISSQTLKLLFQLAQECYLDDAIKNMFLGKIINKTENRPVLHVALRNRLNNKIILNNIDIMNEIQIELKKIKCFSESIIDGSWKGFTGKSISDVVNIGIGGSYLGPYMITEALKIYKNHLNIHYISNIDGTEISEVLKKINLETTIFLIASKSFSTDETISNANYLKKWCILKTNYKKYFSKHFFALCENIKTAINFGIKYENIFKFWDWVGGRYSLWSSSGLSIVLSIGFKNFESLLYGAYLMDQHFLHTKISKNIPIILALISIWYTNFFNTETEAIFPYDKYLHVLPEYLQQSYMESNGKSIDRNGKLVTWNTCPIIWGSTGTNGQHSFFQLLHQGTTMVPCDFIIPAISHNLINDHHKKLLSNFLAQTASLAFGNINKDIMNMNLKYSSENFIFSHKTYFGNKPSNSIFLKKITPISLGSLIALYEHKIFVQGVILNIFSFDQWGVELGKTVANNIYNNLFKKKKINVYDCSTIGLINLYKYWNRI.

Glu355 serves as the catalytic Proton donor. Active-site residues include His386 and Lys510.

It belongs to the GPI family.

It is found in the cytoplasm. The catalysed reaction is alpha-D-glucose 6-phosphate = beta-D-fructose 6-phosphate. It participates in carbohydrate biosynthesis; gluconeogenesis. It functions in the pathway carbohydrate degradation; glycolysis; D-glyceraldehyde 3-phosphate and glycerone phosphate from D-glucose: step 2/4. Catalyzes the reversible isomerization of glucose-6-phosphate to fructose-6-phosphate. In Buchnera aphidicola subsp. Cinara cedri (strain Cc), this protein is Glucose-6-phosphate isomerase.